Consider the following 315-residue polypeptide: Homoserine kinase (315 aa).

Pro-97–Thr-107 is an ATP binding site.

Belongs to the GHMP kinase family. Homoserine kinase subfamily.

Its subcellular location is the cytoplasm. It catalyses the reaction L-homoserine + ATP = O-phospho-L-homoserine + ADP + H(+). It functions in the pathway amino-acid biosynthesis; L-threonine biosynthesis; L-threonine from L-aspartate: step 4/5. In terms of biological role, catalyzes the ATP-dependent phosphorylation of L-homoserine to L-homoserine phosphate. The protein is Homoserine kinase of Prochlorococcus marinus (strain NATL2A).